A 674-amino-acid polypeptide reads, in one-letter code: DNA ligase (674 aa).

NAD(+) is bound by residues 34 to 38 (DFEFD), 83 to 84 (SL), and Glu117. The active-site N6-AMP-lysine intermediate is the Lys119. NAD(+)-binding residues include Arg140, Glu184, Lys297, and Lys321. Residues Cys415, Cys418, Cys433, and Cys439 each coordinate Zn(2+). The BRCT domain maps to 598–674 (LVNNNFEGQS…IDEDEFERML (77 aa)).

The protein belongs to the NAD-dependent DNA ligase family. LigA subfamily. The cofactor is Mg(2+). Mn(2+) is required as a cofactor.

It catalyses the reaction NAD(+) + (deoxyribonucleotide)n-3'-hydroxyl + 5'-phospho-(deoxyribonucleotide)m = (deoxyribonucleotide)n+m + AMP + beta-nicotinamide D-nucleotide.. Its function is as follows. DNA ligase that catalyzes the formation of phosphodiester linkages between 5'-phosphoryl and 3'-hydroxyl groups in double-stranded DNA using NAD as a coenzyme and as the energy source for the reaction. It is essential for DNA replication and repair of damaged DNA. This chain is DNA ligase, found in Chlorobaculum tepidum (strain ATCC 49652 / DSM 12025 / NBRC 103806 / TLS) (Chlorobium tepidum).